Here is a 328-residue protein sequence, read N- to C-terminus: Phosphate acyltransferase (328 aa).

This sequence belongs to the PlsX family. In terms of assembly, homodimer. Probably interacts with PlsY.

The protein localises to the cytoplasm. The catalysed reaction is a fatty acyl-[ACP] + phosphate = an acyl phosphate + holo-[ACP]. The protein operates within lipid metabolism; phospholipid metabolism. Its function is as follows. Catalyzes the reversible formation of acyl-phosphate (acyl-PO(4)) from acyl-[acyl-carrier-protein] (acyl-ACP). This enzyme utilizes acyl-ACP as fatty acyl donor, but not acyl-CoA. This Campylobacter jejuni subsp. jejuni serotype O:2 (strain ATCC 700819 / NCTC 11168) protein is Phosphate acyltransferase.